We begin with the raw amino-acid sequence, 291 residues long: Pituitary-specific positive transcription factor 1 (291 aa).

The 9aaTAD motif lies at 5–13 (AFTSADTFI). The POU-specific domain maps to 124-198 (MDSPEIRELE…ILSKWLEEAE (75 aa)). Positions 214–273 (KRKRRTTISIAAKDALERHFGEQNKPSSQEIMRMAEELNLEKEVVRVWFCNRRQREKRVK) form a DNA-binding region, homeobox.

It belongs to the POU transcription factor family. Class-1 subfamily. In terms of assembly, interacts with PITX1. Interacts with LHX3. Interacts with ELK1.

The protein localises to the nucleus. Its function is as follows. Transcription factor involved in the specification of the lactotrope, somatotrope, and thyrotrope phenotypes in the developing anterior pituitary. Specifically binds to the consensus sequence 5'-TAAAT-3'. Activates growth hormone and prolactin genes. This Homo sapiens (Human) protein is Pituitary-specific positive transcription factor 1 (POU1F1).